The chain runs to 162 residues: Ribonuclease P protein component (162 aa).

The disordered stretch occupies residues 1 to 62 (MDEKDLATQP…GPPKAGGRLL (62 aa)). Residues 21–36 (GPHEDPRRQERAEAQA) show a composition bias toward basic and acidic residues.

This sequence belongs to the RnpA family. As to quaternary structure, consists of a catalytic RNA component (M1 or rnpB) and a protein subunit.

The catalysed reaction is Endonucleolytic cleavage of RNA, removing 5'-extranucleotides from tRNA precursor.. In terms of biological role, RNaseP catalyzes the removal of the 5'-leader sequence from pre-tRNA to produce the mature 5'-terminus. It can also cleave other RNA substrates such as 4.5S RNA. The protein component plays an auxiliary but essential role in vivo by binding to the 5'-leader sequence and broadening the substrate specificity of the ribozyme. This is Ribonuclease P protein component from Thermus aquaticus.